A 234-amino-acid polypeptide reads, in one-letter code: Fibrillarin-like rRNA/tRNA 2'-O-methyltransferase (234 aa).

S-adenosyl-L-methionine is bound by residues Thr-90–Thr-91, Glu-109–Phe-110, Asp-134–Ala-135, and Asp-154–Gln-157.

Belongs to the methyltransferase superfamily. Fibrillarin family. As to quaternary structure, interacts with nop5. Component of box C/D small ribonucleoprotein (sRNP) particles that contain rpl7ae, FlpA and nop5, plus a guide RNA.

Functionally, involved in pre-rRNA and tRNA processing. Utilizes the methyl donor S-adenosyl-L-methionine to catalyze the site-specific 2'-hydroxyl methylation of ribose moieties in rRNA and tRNA. Site specificity is provided by a guide RNA that base pairs with the substrate. Methylation occurs at a characteristic distance from the sequence involved in base pairing with the guide RNA. The sequence is that of Fibrillarin-like rRNA/tRNA 2'-O-methyltransferase from Staphylothermus marinus (strain ATCC 43588 / DSM 3639 / JCM 9404 / F1).